A 295-amino-acid chain; its full sequence is MYLRFANRKPYEKLHLSTALEDWDMSEELKLSITADQYFAGADDKVERYTLRRQHSTELSPTRSEEGDFQECKFRPSLWLVVDPNLVIPCPEWINRIPPAPELTSPPLQLQRQLSVEYSTVEDSEDEAPTSCSDLMTDDDNDDSYNPCQPKNKHKRAKCLGKKMRVQKGLTELESWARPPLNYCNLISLALRNSEDGCLNVQQIYSFVRDHFPFFRIAPDGWKNTVRHNLCFSSSFEKSSGWVCADGHRRSCLWKLTRQGRRKFRNEMHALSDDLLHVLRRSMKKPALMELMFGM.

The disordered stretch occupies residues 119–146 (STVEDSEDEAPTSCSDLMTDDDNDDSYN). The segment at residues 178–275 (RPPLNYCNLI…NEMHALSDDL (98 aa)) is a DNA-binding region (fork-head).

Ubiquitously expressed in early cleavage stage and gastrula stage embryos.

The protein resides in the nucleus. In Xenopus laevis (African clawed frog), this protein is Forkhead box protein N5.